Reading from the N-terminus, the 682-residue chain is DNA-directed RNA polymerase subunit beta' (682 aa).

Cys69, Cys71, Cys87, and Cys90 together coordinate Zn(2+). The Mg(2+) site is built by Asp491, Asp493, and Asp495.

Belongs to the RNA polymerase beta' chain family. RpoC1 subfamily. In plastids the minimal PEP RNA polymerase catalytic core is composed of four subunits: alpha, beta, beta', and beta''. When a (nuclear-encoded) sigma factor is associated with the core the holoenzyme is formed, which can initiate transcription. Mg(2+) serves as cofactor. Zn(2+) is required as a cofactor.

Its subcellular location is the plastid. The protein localises to the chloroplast. The enzyme catalyses RNA(n) + a ribonucleoside 5'-triphosphate = RNA(n+1) + diphosphate. Its function is as follows. DNA-dependent RNA polymerase catalyzes the transcription of DNA into RNA using the four ribonucleoside triphosphates as substrates. The protein is DNA-directed RNA polymerase subunit beta' of Lotus japonicus (Lotus corniculatus var. japonicus).